The sequence spans 156 residues: Riboflavin synthase (156 aa).

Belongs to the DMRL synthase family.

It carries out the reaction 2 6,7-dimethyl-8-(1-D-ribityl)lumazine + H(+) = 5-amino-6-(D-ribitylamino)uracil + riboflavin. It functions in the pathway cofactor biosynthesis; riboflavin biosynthesis; riboflavin from 2-hydroxy-3-oxobutyl phosphate and 5-amino-6-(D-ribitylamino)uracil: step 2/2. The sequence is that of Riboflavin synthase (ribC) from Methanocaldococcus jannaschii (strain ATCC 43067 / DSM 2661 / JAL-1 / JCM 10045 / NBRC 100440) (Methanococcus jannaschii).